The primary structure comprises 136 residues: Histone H3 (136 aa).

Positions 1 to 42 are disordered; that stretch reads MARTKQTARKSTGGKAPRKQLATKAAAKSAPATGGVKKPHRY. K5 bears the N6-methylated lysine mark. K10 carries the post-translational modification N6-acetyllysine; alternate. Residue K10 is modified to N6-methylated lysine; alternate. S11 is subject to Phosphoserine. 2 positions are modified to N6-acetyllysine: K15 and K24. Over residues 22 to 33 the composition is skewed to low complexity; sequence ATKAAAKSAPAT. An N6-methylated lysine mark is found at K28, K37, and K80.

Belongs to the histone H3 family. In terms of assembly, the nucleosome is a histone octamer containing two molecules each of H2A, H2B, H3 and H4 assembled in one H3-H4 heterotetramer and two H2A-H2B heterodimers. The octamer wraps approximately 147 bp of DNA. Post-translationally, acetylation is generally linked to gene activation. Methylation at Lys-5 is linked to gene activation. Methylation at Lys-10 is linked to gene repression.

The protein resides in the nucleus. The protein localises to the chromosome. In terms of biological role, core component of nucleosome. Nucleosomes wrap and compact DNA into chromatin, limiting DNA accessibility to the cellular machineries which require DNA as a template. Histones thereby play a central role in transcription regulation, DNA repair, DNA replication and chromosomal stability. DNA accessibility is regulated via a complex set of post-translational modifications of histones, also called histone code, and nucleosome remodeling. The protein is Histone H3 of Acropora formosa (Staghorn coral).